The sequence spans 842 residues: Elongation factor 2 (842 aa).

The tr-type G domain maps to 17-346; it reads TNVRNMSVIA…MIVMHLPSPV (330 aa). Residues 26–33, 158–161, and 213–215 contribute to the GTP site; these read AHVDHGKS, NKVD, and SGL. His699 is modified (diphthamide).

This sequence belongs to the TRAFAC class translation factor GTPase superfamily. Classic translation factor GTPase family. EF-G/EF-2 subfamily.

The protein resides in the cytoplasm. It carries out the reaction GTP + H2O = GDP + phosphate + H(+). Its function is as follows. Catalyzes the GTP-dependent ribosomal translocation step during translation elongation. During this step, the ribosome changes from the pre-translocational (PRE) to the post-translocational (POST) state as the newly formed A-site-bound peptidyl-tRNA and P-site-bound deacylated tRNA move to the P and E sites, respectively. Catalyzes the coordinated movement of the two tRNA molecules, the mRNA and conformational changes in the ribosome. The chain is Elongation factor 2 (EFT1) from Candida glabrata (strain ATCC 2001 / BCRC 20586 / JCM 3761 / NBRC 0622 / NRRL Y-65 / CBS 138) (Yeast).